Reading from the N-terminus, the 417-residue chain is F-box protein At3g07870 (417 aa).

Residues 22 to 68 (GGGLESLPEDIIADIFSRLPISSIARLMFVCRSWRSVLTQHGRLSSS) form the F-box domain.

This Arabidopsis thaliana (Mouse-ear cress) protein is F-box protein At3g07870.